Reading from the N-terminus, the 485-residue chain is Noelin (485 aa).

The first 16 residues, 1–16 (MSVPLLKIGVVLSTMA), serve as a signal peptide directing secretion. N-linked (GlcNAc...) asparagine glycosylation is found at asparagine 33, asparagine 103, asparagine 187, asparagine 288, asparagine 307, asparagine 394, asparagine 431, and asparagine 473. A coiled-coil region spans residues 87-227 (RDARTKQLRQ…LRACMQKLAC (141 aa)). In terms of domain architecture, Olfactomedin-like spans 226 to 478 (ACGKLTGISD…QTLYNVTLFH (253 aa)). A disulfide bond links cysteine 227 and cysteine 409. Residues 482–485 (SDEL) carry the Endoplasmic reticulum retention signal motif.

In terms of assembly, homotetramer; disulfide-linked. Dimer of dimers, giving rise to a V-shaped homotretramer. Isoform 1 and isoform 3 interact with RTN4R. Identified in a complex with RTN4R and LINGO1. Peripherally associated with AMPAR complex. AMPAR complex consists of an inner core made of 4 pore-forming GluA/GRIA proteins (GRIA1, GRIA2, GRIA3 and GRIA4) and 4 major auxiliary subunits arranged in a twofold symmetry. One of the two pairs of distinct binding sites is occupied either by CNIH2, CNIH3 or CACNG2, CACNG3. The other harbors CACNG2, CACNG3, CACNG4, CACNG8 or GSG1L. This inner core of AMPAR complex is complemented by outer core constituents binding directly to the GluA/GRIA proteins at sites distinct from the interaction sites of the inner core constituents. Outer core constituents include at least PRRT1, PRRT2, CKAMP44/SHISA9, FRRS1L and NRN1. The proteins of the inner and outer core serve as a platform for other, more peripherally associated AMPAR constituents, including OLFM1. Alone or in combination, these auxiliary subunits control the gating and pharmacology of the AMPAR complex and profoundly impact their biogenesis and protein processing. Interacts with OLFM2. Interacts with DTNB. Expressed in the brain cortex, olfactory bulb and vomeronasal neuroepithelium (at protein level). Detected in brain cortex, hippocampus, dorsal root ganglion and olfactory bulb.

It localises to the secreted. Its subcellular location is the synapse. The protein resides in the endoplasmic reticulum. The protein localises to the cell projection. It is found in the axon. It localises to the perikaryon. Its function is as follows. Contributes to the regulation of axonal growth in the embryonic and adult central nervous system by inhibiting interactions between RTN4R and LINGO1. Inhibits RTN4R-mediated axon growth cone collapse. May play an important role in regulating the production of neural crest cells by the neural tube. May be required for normal responses to olfactory stimuli. This chain is Noelin (Olfm1), found in Mus musculus (Mouse).